A 121-amino-acid polypeptide reads, in one-letter code: Movement protein TGBp3 (121 aa).

The interval 1 to 40 (MHYPTEADTSTGPNPSATSAPVRPRHVTPSLSPSSSSSPS) is disordered. Topologically, residues 1 to 43 (MHYPTEADTSTGPNPSATSAPVRPRHVTPSLSPSSSSSPSPDS) are lumenal. A compositionally biased stretch (polar residues) spans 7–19 (ADTSTGPNPSATS). Residues 29–40 (PSLSPSSSSSPS) are compositionally biased toward low complexity. The chain crosses the membrane as a helical span at residues 44–64 (FYYFLAAAVILTAALAAALLT). Topologically, residues 65-121 (PNPGCTIVITGHTTIIQGSCPIPPQLVLAAHPRGLSLEQYLKFTNTLPDGSQHRSHR) are cytoplasmic.

The protein belongs to the Tymovirales TGBp3 protein family.

The protein resides in the host endoplasmic reticulum membrane. Its function is as follows. Plays a role in viral cell-to-cell propagation, by facilitating genome transport to neighboring plant cells through plasmosdesmata. May induce the formation of granular vesicles derived from the Endoplasmic reticulum, which align on actin filaments. This chain is Movement protein TGBp3, found in Plantago asiatica (P1AMV).